The chain runs to 1450 residues: Protein TIC 214 (1450 aa).

6 helical membrane-spanning segments follow: residues 29-49 (FGLYYGFLTTLPISFSHIVVI), 61-81 (VMAFCGLITGQLCMIGTIYYT), 86-106 (LFIKPHLILLLSIIYSFFYWQ), 132-152 (FFDSFVFQILNPILLPTPIFF), 166-186 (LNFFLSFFIGSLIGNFLFFNA), and 213-233 (IIPIVFCICLIPIAKYSHIPF).

Belongs to the TIC214 family. In terms of assembly, part of the Tic complex.

Its subcellular location is the plastid. The protein localises to the chloroplast inner membrane. In terms of biological role, involved in protein precursor import into chloroplasts. May be part of an intermediate translocation complex acting as a protein-conducting channel at the inner envelope. This Chaetosphaeridium globosum (Charophycean green alga) protein is Protein TIC 214.